We begin with the raw amino-acid sequence, 241 residues long: Small ribosomal subunit protein uS3 (241 aa).

Positions 39-108 (IREGVLKLLK…NLKVEVKVIE (70 aa)) constitute a KH type-2 domain. The tract at residues 215–241 (SQRVSEKAPMNNDRRFNNKNNNRGGRK) is disordered. Residues 232–241 (NKNNNRGGRK) are compositionally biased toward low complexity.

This sequence belongs to the universal ribosomal protein uS3 family. As to quaternary structure, part of the 30S ribosomal subunit. Forms a tight complex with proteins S10 and S14.

Binds the lower part of the 30S subunit head. Binds mRNA in the 70S ribosome, positioning it for translation. The protein is Small ribosomal subunit protein uS3 of Mesoplasma florum (strain ATCC 33453 / NBRC 100688 / NCTC 11704 / L1) (Acholeplasma florum).